The sequence spans 112 residues: ATP synthase subunit c (112 aa).

The next 2 helical transmembrane spans lie at 36–56 (FSVLAAGLGLGVAALGGAIGM) and 81–101 (MFIALAMIEAQVIYALVIALI).

Belongs to the ATPase C chain family. As to quaternary structure, F-type ATPases have 2 components, F(1) - the catalytic core - and F(0) - the membrane proton channel. F(1) has five subunits: alpha(3), beta(3), gamma(1), delta(1), epsilon(1). F(0) has three main subunits: a(1), b(2) and c(10-14). The alpha and beta chains form an alternating ring which encloses part of the gamma chain. F(1) is attached to F(0) by a central stalk formed by the gamma and epsilon chains, while a peripheral stalk is formed by the delta and b chains.

The protein resides in the cell inner membrane. F(1)F(0) ATP synthase produces ATP from ADP in the presence of a proton or sodium gradient. F-type ATPases consist of two structural domains, F(1) containing the extramembraneous catalytic core and F(0) containing the membrane proton channel, linked together by a central stalk and a peripheral stalk. During catalysis, ATP synthesis in the catalytic domain of F(1) is coupled via a rotary mechanism of the central stalk subunits to proton translocation. In Campylobacter jejuni subsp. jejuni serotype O:2 (strain ATCC 700819 / NCTC 11168), this protein is ATP synthase subunit c.